We begin with the raw amino-acid sequence, 91 residues long: Small ubiquitin-related modifier (91 aa).

One can recognise a Ubiquitin-like domain in the interval 13 to 91 (EYIKIKVVGQ…EVYQEQLGGF (79 aa)). Residue glycine 90 forms a Glycyl lysine isopeptide (Gly-Lys) (interchain with K-? in acceptor proteins) linkage. Phenylalanine 91 is a propeptide.

It belongs to the ubiquitin family. SUMO subfamily. In terms of assembly, covalently attached to tbx-2. Covalently attached to lin-1. Covalently attached to lin-11. Covalently attached to sop-2. Covalently attached to bet-1. Post-translationally, cleavage of precursor form by ulp-1 is necessary for function.

The protein resides in the cytoplasm. It localises to the nucleus. It is found in the cytoskeleton. The protein localises to the spindle. Its subcellular location is the chromosome. The protein resides in the microtubule organizing center. It localises to the centrosome. Functionally, ubiquitin-like protein which can be covalently attached to target lysines as a monomer. Does not seem to be involved in protein degradation and may function as an antagonist of ubiquitin in the degradation process. Plays a role in a number of cellular processes such as nuclear transport, DNA replication and repair, mitosis and signal transduction. Covalent attachment to its substrates requires prior activation by the E1 complex aos-1-uba-2 and linkage to the E2 enzyme ubc-9, and can be promoted by an E3 ligase such as gei-17. Required for embryonic development, fertility, vulval morphogenesis and inhibition of vulval cell fates. Probably by sumoylating bet-1, prevents muscle myosin depletion in aging adults probably by preventing myoblast growth factor receptor egl-15 overexpression. Plays a role in the attenuation of the let-60/ras pathway. Plays a role in male tail tip morphogenesis. Plays a role in the mitochondrial stress response with its covalent attachment to transcription factors dve-1 and afts-1 negatively regulating the mitochondrial unfolded protein response. The protein is Small ubiquitin-related modifier of Caenorhabditis elegans.